Here is a 1907-residue protein sequence, read N- to C-terminus: Chromatin modification-related protein EAF1 B (1907 aa).

Disordered stretches follow at residues 108-208 (ASPH…TDLV), 261-287 (NRVS…GSKT), 323-373 (GGSP…SHAN), and 449-469 (NQSH…ETEK). The span at 140–151 (SENKSVEGERNL) shows a compositional bias: basic and acidic residues. Composition is skewed to polar residues over residues 261 to 270 (NRVSSNSLNT), 333 to 342 (GQKNSSTQLN), and 355 to 372 (TNRG…SSHA). In terms of domain architecture, HSA spans 563–641 (CGTAPVEVRE…LSYAILQFWS (79 aa)). Disordered regions lie at residues 836 to 909 (SSSL…AVQK) and 928 to 952 (AETS…TWHL). Positions 856–866 (RRVRTASRHRV) are enriched in basic residues. Polar residues-rich tracts occupy residues 884–898 (TDAS…QDEY) and 942–952 (QGSAYDQTWHL). The SANT domain occupies 1049–1105 (SGNPWSLFEDQALVVLVHDMGPNWELISDAMNSTLKIKYIYRNPTECKDRHKILMDK). Disordered stretches follow at residues 1107-1131 (AGDG…PGIP), 1235-1266 (PVLP…GLQS), 1296-1319 (LSGR…DRGH), 1429-1465 (GHLS…QQEA), 1477-1594 (YLQQ…QQLN), 1638-1703 (VRPD…SPAT), 1767-1791 (VPQS…QASN), and 1824-1907 (VNNS…TKVE). Composition is skewed to polar residues over residues 1116-1125 (DSGNSQSYPS), 1242-1266 (AHPS…GLQS), 1296-1310 (LSGR…STPA), 1431-1444 (LSQQ…SHVL), and 1453-1462 (QSPSQATGAQ). Over residues 1493 to 1512 (PHVQQPQGSSVSSSSQNSPQ) the composition is skewed to low complexity. The segment covering 1513-1529 (TQPPVSPQPLSMPPVSP) has biased composition (pro residues). Polar residues-rich tracts occupy residues 1532-1545 (NINA…QKSQ), 1554-1568 (SPQS…QAGK), 1585-1594 (RQPTQGQQLN), 1640-1655 (PDQQ…TDLQ), 1662-1672 (PLSSNHSQQLP), 1681-1703 (PSPQ…SPAT), 1769-1782 (QSVT…SMGT), and 1824-1844 (VNNS…NQGL). 2 stretches are compositionally biased toward basic and acidic residues: residues 1863 to 1872 (SEEKRPKLPE) and 1882 to 1892 (LASEEQPHLEE).

The protein belongs to the EAF1 family. As to quaternary structure, component of the NuA4 histone acetyltransferase complex. Interacts with ARP4 and SWC4, and (via HSA domain) with TAF14 and TAF14B. As to expression, expressed in leaves.

The protein localises to the nucleus. Component of the NuA4 histone acetyltransferase complex which is involved in transcriptional activation of selected genes principally by acetylation of nucleosomal histone H4 and H2A. The sequence is that of Chromatin modification-related protein EAF1 B (EAF1B) from Arabidopsis thaliana (Mouse-ear cress).